The chain runs to 273 residues: Glutamate 5-kinase (273 aa).

Lys-15 is an ATP binding site. Residues Ser-55, Asp-142, and Asn-158 each coordinate substrate. ATP contacts are provided by residues 178–179 and 220–226; these read SD and TGGMLSK.

The protein belongs to the glutamate 5-kinase family.

Its subcellular location is the cytoplasm. It catalyses the reaction L-glutamate + ATP = L-glutamyl 5-phosphate + ADP. It participates in amino-acid biosynthesis; L-proline biosynthesis; L-glutamate 5-semialdehyde from L-glutamate: step 1/2. In terms of biological role, catalyzes the transfer of a phosphate group to glutamate to form L-glutamate 5-phosphate. The chain is Glutamate 5-kinase from Streptococcus pyogenes serotype M1.